A 359-amino-acid polypeptide reads, in one-letter code: Alanine racemase, biosynthetic (359 aa).

Lysine 34 (proton acceptor; specific for D-alanine) is an active-site residue. N6-(pyridoxal phosphate)lysine is present on lysine 34. Arginine 129 contacts substrate. The Proton acceptor; specific for L-alanine role is filled by tyrosine 255. A substrate-binding site is contributed by methionine 303.

This sequence belongs to the alanine racemase family. The cofactor is pyridoxal 5'-phosphate.

It carries out the reaction L-alanine = D-alanine. It functions in the pathway amino-acid biosynthesis; D-alanine biosynthesis; D-alanine from L-alanine: step 1/1. The protein operates within cell wall biogenesis; peptidoglycan biosynthesis. Functionally, catalyzes the interconversion of L-alanine and D-alanine. Provides the D-alanine required for cell wall biosynthesis. This chain is Alanine racemase, biosynthetic (alr), found in Escherichia coli O6:H1 (strain CFT073 / ATCC 700928 / UPEC).